The primary structure comprises 454 residues: Glutamyl-tRNA reductase (454 aa).

Residues 49 to 52, Ser-109, 114 to 116, and Gln-120 contribute to the substrate site; these read TCNR and ETQ. The Nucleophile role is filled by Cys-50. 189-194 lines the NADP(+) pocket; that stretch reads GAGKMS. Residues 432–442 are compositionally biased toward basic and acidic residues; it reads DHAEQSWKEGQ. A disordered region spans residues 432–454; that stretch reads DHAEQSWKEGQRPSLNQGMALRT.

It belongs to the glutamyl-tRNA reductase family. As to quaternary structure, homodimer.

It carries out the reaction (S)-4-amino-5-oxopentanoate + tRNA(Glu) + NADP(+) = L-glutamyl-tRNA(Glu) + NADPH + H(+). It participates in porphyrin-containing compound metabolism; protoporphyrin-IX biosynthesis; 5-aminolevulinate from L-glutamyl-tRNA(Glu): step 1/2. Functionally, catalyzes the NADPH-dependent reduction of glutamyl-tRNA(Glu) to glutamate 1-semialdehyde (GSA). The polypeptide is Glutamyl-tRNA reductase (Shouchella clausii (strain KSM-K16) (Alkalihalobacillus clausii)).